The primary structure comprises 387 residues: Capsid protein (387 aa).

Residues 1 to 33 are compositionally biased toward basic residues; it reads MARTKSKPRKRTTVRKARRSVKRRTTTKGTKRK. 2 disordered regions span residues 1-47 and 365-387; these read MART…RGVA and KSAK…REFN. 2 consecutive short sequence motifs (nuclear localization signal) follow at residues 8 to 15 and 30 to 37; these read PRKRTTVR and TKRKTAGD. Low complexity predominate over residues 370-379; sequence NDQLNNNQDA.

The protein localises to the host nucleus. Its subcellular location is the virion. In terms of biological role, self-assembles to form the virion icosahedral capsid. This chain is Capsid protein, found in Chaetoceros protobacilladnavirus 2 (Chaetoceros sp. DNA virus 7).